A 518-amino-acid polypeptide reads, in one-letter code: Efflux pump terJ (518 aa).

Residues 43–63 (IAFIVVVCMAQLVSQAGLGQV) form a helical membrane-spanning segment. N-linked (GlcNAc...) asparagine glycosylation occurs at Asn79. 12 helical membrane-spanning segments follow: residues 82–102 (QLSW…LGAG), 112–132 (LLFT…AFAE), 135–155 (GPVF…FLLP), 177–197 (AFGS…ALAA), 204–224 (WGFW…IFWV), 244–264 (IAGC…LNMA), 272–292 (PYIY…GYIE), 311–331 (FVLA…FYGW), 339–359 (GISP…GFVA), 364–384 (GLIL…AAFC), 400–420 (WAQL…SFPA), and 439–459 (SLVA…GAIV). N-linked (GlcNAc...) asparagine glycosylation occurs at Asn466. The chain crosses the membrane as a helical span at residues 477 to 497 (AWYLGVGLAASGIILTMFFAL).

It belongs to the major facilitator superfamily.

It is found in the cell membrane. Functionally, efflux pump that might be required for efficient secretion of terrein or other secondary metabolies produced by the terrein genne cluster. In Aspergillus terreus (strain NIH 2624 / FGSC A1156), this protein is Efflux pump terJ.